A 196-amino-acid polypeptide reads, in one-letter code: DnaA initiator-associating protein DiaA (196 aa).

The 163-residue stretch at Leu-34–Asp-196 folds into the SIS domain.

It belongs to the SIS family. DiaA subfamily. In terms of assembly, homotetramer; dimer of dimers.

In terms of biological role, required for the timely initiation of chromosomal replication via direct interactions with the DnaA initiator protein. The polypeptide is DnaA initiator-associating protein DiaA (Yersinia pseudotuberculosis serotype O:1b (strain IP 31758)).